A 240-amino-acid chain; its full sequence is UDP-2,3-diacylglucosamine hydrolase (240 aa).

Asp-8, His-10, Asp-41, Asn-79, and His-114 together coordinate Mn(2+). Position 79–80 (79–80 (NR)) interacts with substrate. 5 residues coordinate substrate: Asp-122, Ser-160, Asn-164, Lys-167, and His-195. His-195 and His-197 together coordinate Mn(2+).

Belongs to the LpxH family. Mn(2+) is required as a cofactor.

It localises to the cell inner membrane. The catalysed reaction is UDP-2-N,3-O-bis[(3R)-3-hydroxytetradecanoyl]-alpha-D-glucosamine + H2O = 2-N,3-O-bis[(3R)-3-hydroxytetradecanoyl]-alpha-D-glucosaminyl 1-phosphate + UMP + 2 H(+). It participates in glycolipid biosynthesis; lipid IV(A) biosynthesis; lipid IV(A) from (3R)-3-hydroxytetradecanoyl-[acyl-carrier-protein] and UDP-N-acetyl-alpha-D-glucosamine: step 4/6. Functionally, hydrolyzes the pyrophosphate bond of UDP-2,3-diacylglucosamine to yield 2,3-diacylglucosamine 1-phosphate (lipid X) and UMP by catalyzing the attack of water at the alpha-P atom. Involved in the biosynthesis of lipid A, a phosphorylated glycolipid that anchors the lipopolysaccharide to the outer membrane of the cell. This Escherichia coli (strain UTI89 / UPEC) protein is UDP-2,3-diacylglucosamine hydrolase.